Here is a 444-residue protein sequence, read N- to C-terminus: Homogentisate 1,2-dioxygenase (444 aa).

Residues 92–111 (GDSADVPPTPPNQLRWDPLP) are disordered. The Proton acceptor role is filled by H298. Fe cation-binding residues include H341 and E347. Homogentisate is bound by residues Y356 and H377. H377 serves as a coordination point for Fe cation.

The protein belongs to the homogentisate dioxygenase family. As to quaternary structure, hexamer; dimer of trimers. It depends on Fe cation as a cofactor.

It catalyses the reaction homogentisate + O2 = 4-maleylacetoacetate + H(+). The protein operates within amino-acid degradation; L-phenylalanine degradation; acetoacetate and fumarate from L-phenylalanine: step 4/6. Functionally, involved in the catabolism of homogentisate (2,5-dihydroxyphenylacetate or 2,5-OH-PhAc), a central intermediate in the degradation of phenylalanine and tyrosine. Catalyzes the oxidative ring cleavage of the aromatic ring of homogentisate to yield maleylacetoacetate. The polypeptide is Homogentisate 1,2-dioxygenase (Burkholderia vietnamiensis (strain G4 / LMG 22486) (Burkholderia cepacia (strain R1808))).